Here is a 204-residue protein sequence, read N- to C-terminus: Holliday junction branch migration complex subunit RuvA (204 aa).

The interval 1-67 (MIGYLEGKIL…QPKPVLIGFN (67 aa)) is domain I. The interval 68 to 145 (SLEEREFFER…VFAGEHGGEP (78 aa)) is domain II. The tract at residues 146–156 (AGPAPVEENFH) is flexible linker. Residues 156–204 (HLLVLDVLVNQLGHKAAEAKELINQAIKRNPAISSPEELFDEVYRGETG) are domain III.

The protein belongs to the RuvA family. Homotetramer. Forms an RuvA(8)-RuvB(12)-Holliday junction (HJ) complex. HJ DNA is sandwiched between 2 RuvA tetramers; dsDNA enters through RuvA and exits via RuvB. An RuvB hexamer assembles on each DNA strand where it exits the tetramer. Each RuvB hexamer is contacted by two RuvA subunits (via domain III) on 2 adjacent RuvB subunits; this complex drives branch migration. In the full resolvosome a probable DNA-RuvA(4)-RuvB(12)-RuvC(2) complex forms which resolves the HJ.

The protein resides in the cytoplasm. Its function is as follows. The RuvA-RuvB-RuvC complex processes Holliday junction (HJ) DNA during genetic recombination and DNA repair, while the RuvA-RuvB complex plays an important role in the rescue of blocked DNA replication forks via replication fork reversal (RFR). RuvA specifically binds to HJ cruciform DNA, conferring on it an open structure. The RuvB hexamer acts as an ATP-dependent pump, pulling dsDNA into and through the RuvAB complex. HJ branch migration allows RuvC to scan DNA until it finds its consensus sequence, where it cleaves and resolves the cruciform DNA. The protein is Holliday junction branch migration complex subunit RuvA of Desulfatibacillum aliphaticivorans.